Reading from the N-terminus, the 197-residue chain is NADH-quinone oxidoreductase subunit C (197 aa).

It belongs to the complex I 30 kDa subunit family. In terms of assembly, NDH-1 is composed of 14 different subunits. Subunits NuoB, C, D, E, F, and G constitute the peripheral sector of the complex.

The protein resides in the cell inner membrane. It carries out the reaction a quinone + NADH + 5 H(+)(in) = a quinol + NAD(+) + 4 H(+)(out). NDH-1 shuttles electrons from NADH, via FMN and iron-sulfur (Fe-S) centers, to quinones in the respiratory chain. The immediate electron acceptor for the enzyme in this species is believed to be ubiquinone. Couples the redox reaction to proton translocation (for every two electrons transferred, four hydrogen ions are translocated across the cytoplasmic membrane), and thus conserves the redox energy in a proton gradient. The sequence is that of NADH-quinone oxidoreductase subunit C from Methylobacillus flagellatus (strain ATCC 51484 / DSM 6875 / VKM B-1610 / KT).